Reading from the N-terminus, the 281-residue chain is Diaminopimelate epimerase (281 aa).

Residues asparagine 13, glutamine 51, and asparagine 70 each contribute to the substrate site. Cysteine 79 serves as the catalytic Proton donor. Residues 80-81 (GN), asparagine 163, asparagine 196, and 214-215 (ER) each bind substrate. Residue cysteine 223 is the Proton acceptor of the active site. Residue 224 to 225 (GS) coordinates substrate.

It belongs to the diaminopimelate epimerase family. As to quaternary structure, homodimer.

The protein resides in the cytoplasm. The enzyme catalyses (2S,6S)-2,6-diaminopimelate = meso-2,6-diaminopimelate. It functions in the pathway amino-acid biosynthesis; L-lysine biosynthesis via DAP pathway; DL-2,6-diaminopimelate from LL-2,6-diaminopimelate: step 1/1. In terms of biological role, catalyzes the stereoinversion of LL-2,6-diaminopimelate (L,L-DAP) to meso-diaminopimelate (meso-DAP), a precursor of L-lysine and an essential component of the bacterial peptidoglycan. In Alcanivorax borkumensis (strain ATCC 700651 / DSM 11573 / NCIMB 13689 / SK2), this protein is Diaminopimelate epimerase.